Here is a 3218-residue protein sequence, read N- to C-terminus: Serine/threonine-protein kinase Smg1 (3218 aa).

The interval 32 to 78 (LNNNGNHGDSSNEGGGGNGSGRGGATGSGNIAGLGGSESMWSPGGGK) is disordered. Positions 33–43 (NNNGNHGDSSN) are enriched in low complexity. The segment covering 44–67 (EGGGGNGSGRGGATGSGNIAGLGG) has biased composition (gly residues). A Phosphoserine modification is found at Ser-70. In terms of domain architecture, FAT spans 1289 to 1692 (DAAAAAREEG…IFPAVVGANR (404 aa)). One copy of the HEAT repeat lies at 1643–1678 (APWKVIIPQLFSRLNHHEPYVRKSVCDLLCRLAKSR). The 336-residue stretch at 1897 to 2232 (VESSVCVLPT…LGVGDLKYHK (336 aa)) folds into the PI3K/PI4K catalytic domain. The interval 1903–1909 (VLPTKTK) is G-loop. The catalytic loop stretch occupies residues 2101-2109 (GLGDRHLDN). The interval 2121–2145 (HIDYNVCFEKGRTLRIPEKVPFRLT) is activation loop. One can recognise an FATC domain in the interval 3186–3218 (QRSTVAEQVDYVIREACNPENLAVLYEGWTPWV).

It belongs to the PI3/PI4-kinase family. In terms of assembly, component of a post-splicing multiprotein NMD complex. Requires Mn(2+) as cofactor.

Its subcellular location is the cytoplasm. The catalysed reaction is L-seryl-[protein] + ATP = O-phospho-L-seryl-[protein] + ADP + H(+). The enzyme catalyses L-threonyl-[protein] + ATP = O-phospho-L-threonyl-[protein] + ADP + H(+). Functionally, serine/threonine protein kinase involved in mRNA surveillance. Recognizes the substrate consensus sequence [ST]-Q. Involved in nonsense-mediated decay (NMD) of mRNAs containing premature stop codons, probably by phosphorylating Upf1. This is Serine/threonine-protein kinase Smg1 (nonC) from Drosophila melanogaster (Fruit fly).